The primary structure comprises 185 residues: Ribosome-recycling factor (185 aa).

Belongs to the RRF family.

The protein localises to the cytoplasm. Functionally, responsible for the release of ribosomes from messenger RNA at the termination of protein biosynthesis. May increase the efficiency of translation by recycling ribosomes from one round of translation to another. The protein is Ribosome-recycling factor of Shouchella clausii (strain KSM-K16) (Alkalihalobacillus clausii).